A 462-amino-acid chain; its full sequence is Ubiquitin carboxyl-terminal hydrolase calypso (462 aa).

Positions 29–260 (GWLELESDPG…IRFNLMAVVP (232 aa)) constitute a UCH catalytic domain. The Nucleophile role is filled by C115. Residue H197 is the Proton donor of the active site. The ULD domain occupies 357–385 (NYDKFICTFLTMLAHQGVLGELVSQHLLP). The positively charged C-terminal tail required for binding nucleosomes stretch occupies residues 387–462 (KKISGQSAAN…KGRNKCRKRK (76 aa)). Residues 394-462 (AANRLNKQNS…KGRNKCRKRK (69 aa)) are disordered. Over residues 399-447 (NKQNSAAASTANSSAGATAGGAKSQQQQQQQQQPQQPQTPKNGKSPGKT) the composition is skewed to low complexity. Positions 448-462 (PGRRRKGRNKCRKRK) are enriched in basic residues.

It belongs to the peptidase C12 family. BAP1 subfamily. In terms of assembly, catalytic component of the polycomb repressive deubiquitinase (PR-DUB) complex, at least composed of caly/calypso, Asx and sba (MBD5/6 homolog). The PR-DUB complex associates with nucleosomes to mediate deubiquitination of histone H2AK118ub1 substrates; the association requires the positively charged C-terminal tail of caly, probably due to direct binding of DNA. Interacts (via ULD domain) with Asx (via DEUBAD domain); the interaction produces a stable heterodimer with a composite binding site for ubiquitin. Homodimerizes (via coiled-coil hinge-region between the UCH and ULD domains) to mediate assembly of 2 copies of the caly-Asx heterodimer into a bisymmetric tetramer; dimerization enhances PR-DUB association with nucleosomes.

The protein localises to the nucleus. The enzyme catalyses Thiol-dependent hydrolysis of ester, thioester, amide, peptide and isopeptide bonds formed by the C-terminal Gly of ubiquitin (a 76-residue protein attached to proteins as an intracellular targeting signal).. Functionally, catalytic component of the polycomb repressive deubiquitinase (PR-DUB) complex, a complex that specifically mediates deubiquitination of histone H2A monoubiquitinated at 'Lys-119' (H2AK118ub1). Mediates bisymmetric organization of the PR-DUB complex and is involved in association with nucleosomes to mediate deubiquitination. Does not deubiquitinate monoubiquitinated histone H2B. Required to maintain the transcriptionally repressive state of homeotic genes throughout development. The PR-DUB complex has weak or no activity toward 'Lys-48'- and 'Lys-63'-linked polyubiquitin chains. Polycomb group (PcG) protein. This chain is Ubiquitin carboxyl-terminal hydrolase calypso, found in Drosophila virilis (Fruit fly).